A 200-amino-acid polypeptide reads, in one-letter code: Small ribosomal subunit protein uS4 (200 aa).

Residues 22 to 41 (TGKEIEKRPYAPGQHGPNQR) form a disordered region. The region spanning 92–152 (TRLDNLVYRL…EKSQNLAVVG (61 aa)) is the S4 RNA-binding domain.

The protein belongs to the universal ribosomal protein uS4 family. In terms of assembly, part of the 30S ribosomal subunit. Contacts protein S5. The interaction surface between S4 and S5 is involved in control of translational fidelity.

Its function is as follows. One of the primary rRNA binding proteins, it binds directly to 16S rRNA where it nucleates assembly of the body of the 30S subunit. With S5 and S12 plays an important role in translational accuracy. In Lysinibacillus sphaericus (strain C3-41), this protein is Small ribosomal subunit protein uS4.